A 392-amino-acid polypeptide reads, in one-letter code: MNTPTTGSHPARYPSAAAGEPTLDSWQEPPHNRWAFAHLGEMVPSAAVSRRPVNAPGHALARLGAIAAQLPDLEQRLEQTYTDAFLVLRGTEVVAEYYRAGFAPDDRHLLMSVSKSLCGTVVGALVDEGRIDPAQPVTEYVPELAGSVYDGPSVLQVLDMQISIDYNEDYVDPASEVQTHGRSAGWRTRATGDPADTYEFLTTLRGDGSTGEFQYCSANTDVLAWIVERVTGLRYVEALSTYLWAKLDADRDATITVDTTGFGFAHGGVSCTARDLARVGRMMLDGGVAPGGRVVSEDWVRRVLAGGSHEAMTDKGFTNTFPDGSYTRQWWCTGNERGNVSGIGIHGQNLWLDPLTDSVIVKLSSWPDPDTEHWHRLQNGILLDVSRALDAV.

Residues 1–27 (MNTPTTGSHPARYPSAAAGEPTLDSWQ) are disordered. Residue S112 is part of the active site.

It carries out the reaction [N-(6-aminohexanoyl)](n) + H2O = [N-(6-aminohexanoyl)](n-1) + 6-aminohexanoate. The catalysed reaction is N-(6-aminohexanoyl)-6-aminohexanoate + H2O = 2 6-aminohexanoate. The protein operates within xenobiotic degradation; nylon-6 oligomer degradation. Its function is as follows. Involved in nylon oligomer degradation. The sequence is that of 6-aminohexanoate-dimer hydrolase from Paenarthrobacter ureafaciens.